We begin with the raw amino-acid sequence, 603 residues long: Probable methyltransferase PMT20 (603 aa).

Residues 1 to 16 (MKSGKQSSQPEKGTSR) are Cytoplasmic-facing. A helical; Signal-anchor for type II membrane protein transmembrane segment spans residues 17–37 (ILSLTVLFIAFCGFSFYLGGI). Residues 38-603 (FCSERDKIVA…KLWFSSNQTS (566 aa)) are Lumenal-facing. Residues asparagine 313 and asparagine 600 are each glycosylated (N-linked (GlcNAc...) asparagine).

The protein belongs to the methyltransferase superfamily.

It localises to the golgi apparatus membrane. The polypeptide is Probable methyltransferase PMT20 (Arabidopsis thaliana (Mouse-ear cress)).